Consider the following 164-residue polypeptide: Anterior gradient protein 2 (164 aa).

Positions 1–20 (METVLKTLFVLLVATSLTLA) are cleaved as a signal peptide. 2 consecutive short sequence motifs (homodimer stabilization; interchain) follow at residues 34–43 (SRGWGDNLEW) and 49–56 (EGLYKAKT).

Belongs to the AGR family. As to quaternary structure, monomer and homodimer.

The protein resides in the secreted. It localises to the endoplasmic reticulum. The chain is Anterior gradient protein 2 from Xenopus tropicalis (Western clawed frog).